The chain runs to 419 residues: Squamosa promoter-binding-like protein 2 (419 aa).

Residues 77–96 (SAEVRTHNFTSETGESLPGE) form a disordered region. The segment at 166-243 (TPHCQVEGCN…SDHNARRRKP (78 aa)) adopts an SBP-type zinc-finger fold. Zn(2+) is bound by residues Cys169, Cys174, Cys191, His194, Cys210, Cys213, His217, and Cys229. The Bipartite nuclear localization signal motif lies at 226-242 (KRSCRRRLSDHNARRRK). The disordered stretch occupies residues 230–249 (RRRLSDHNARRRKPNPGRTY).

It depends on Zn(2+) as a cofactor.

The protein localises to the nucleus. Trans-acting factor that binds specifically to the consensus nucleotide sequence 5'-TNCGTACAA-3'. The sequence is that of Squamosa promoter-binding-like protein 2 (SPL2) from Arabidopsis thaliana (Mouse-ear cress).